Consider the following 105-residue polypeptide: Integration host factor subunit beta (105 aa).

This sequence belongs to the bacterial histone-like protein family. In terms of assembly, heterodimer of an alpha and a beta chain.

Its function is as follows. This protein is one of the two subunits of integration host factor, a specific DNA-binding protein that functions in genetic recombination as well as in transcriptional and translational control. The protein is Integration host factor subunit beta of Nitrosomonas europaea (strain ATCC 19718 / CIP 103999 / KCTC 2705 / NBRC 14298).